A 294-amino-acid chain; its full sequence is Oligopeptide transport system permease protein OppC (294 aa).

6 helical membrane passes run 27-47, 94-114, 127-147, 151-171, 202-224, and 260-280; these read MIST…SMFL, IAFA…VITG, FTDF…VTII, NSWS…TRLI, IWPN…NIGL, and WTWV…IFIG. Residues 88–280 form the ABC transmembrane type-1 domain; sequence ARNSFNIAFA…IVVLAIIFIG (193 aa).

The protein belongs to the binding-protein-dependent transport system permease family. OppBC subfamily. The complex is composed of two ATP-binding proteins (OppD and OppF), two transmembrane proteins (OppB and OppC) and a solute-binding protein (OppA).

Its subcellular location is the cell membrane. In terms of biological role, part of the ABC transporter complex OppABCDF involved in the uptake of oligopeptides. Probably responsible for the translocation of the substrate across the membrane. This Lactococcus lactis subsp. cremoris (strain SK11) protein is Oligopeptide transport system permease protein OppC.